The chain runs to 136 residues: Ciliary microtubule inner protein 1 (136 aa).

It is found in the cell projection. The protein resides in the cilium. The protein is Ciliary microtubule inner protein 1 (Cimip1) of Mus musculus (Mouse).